The primary structure comprises 225 residues: Leucyl/phenylalanyl-tRNA--protein transferase (225 aa).

The protein belongs to the L/F-transferase family.

The protein resides in the cytoplasm. The enzyme catalyses N-terminal L-lysyl-[protein] + L-leucyl-tRNA(Leu) = N-terminal L-leucyl-L-lysyl-[protein] + tRNA(Leu) + H(+). It carries out the reaction N-terminal L-arginyl-[protein] + L-leucyl-tRNA(Leu) = N-terminal L-leucyl-L-arginyl-[protein] + tRNA(Leu) + H(+). The catalysed reaction is L-phenylalanyl-tRNA(Phe) + an N-terminal L-alpha-aminoacyl-[protein] = an N-terminal L-phenylalanyl-L-alpha-aminoacyl-[protein] + tRNA(Phe). Functions in the N-end rule pathway of protein degradation where it conjugates Leu, Phe and, less efficiently, Met from aminoacyl-tRNAs to the N-termini of proteins containing an N-terminal arginine or lysine. The sequence is that of Leucyl/phenylalanyl-tRNA--protein transferase from Rhodopseudomonas palustris (strain TIE-1).